We begin with the raw amino-acid sequence, 196 residues long: Large ribosomal subunit protein bL25 (196 aa).

The disordered stretch occupies residues 177–196; sequence VISIAPPKKDAEAETESAAG.

Belongs to the bacterial ribosomal protein bL25 family. CTC subfamily. In terms of assembly, part of the 50S ribosomal subunit; part of the 5S rRNA/L5/L18/L25 subcomplex. Contacts the 5S rRNA. Binds to the 5S rRNA independently of L5 and L18.

Functionally, this is one of the proteins that binds to the 5S RNA in the ribosome where it forms part of the central protuberance. The protein is Large ribosomal subunit protein bL25 of Chlorobium limicola (strain DSM 245 / NBRC 103803 / 6330).